The sequence spans 336 residues: Nucleoid-associated protein Spro_3255 (336 aa).

The protein belongs to the YejK family.

The protein resides in the cytoplasm. It is found in the nucleoid. This chain is Nucleoid-associated protein Spro_3255, found in Serratia proteamaculans (strain 568).